The following is a 111-amino-acid chain: Cystatin (111 aa).

A Cystatin domain is found at 3–103; it reads GGLSPRDVTD…CRFEVWSRPW (101 aa). The Secondary area of contact motif lies at 47–51; that stretch reads QVVSG. Cysteines 65 and 81 form a disulfide.

This sequence belongs to the cystatin family. In terms of tissue distribution, expressed by the venom gland.

The protein localises to the secreted. In terms of biological role, inhibits various C1 cysteine proteases including cathepsin L, papain and cathepsin B. This protein has no toxic activity and its function in the venom is unknown. It may play a role as housekeeping or regulatory protein. This chain is Cystatin, found in Bitis arietans (African puff adder).